The sequence spans 238 residues: Ribonuclease PH (238 aa).

Phosphate is bound by residues arginine 86 and 124-126; that span reads GTR.

Belongs to the RNase PH family. Homohexameric ring arranged as a trimer of dimers.

It carries out the reaction tRNA(n+1) + phosphate = tRNA(n) + a ribonucleoside 5'-diphosphate. In terms of biological role, phosphorolytic 3'-5' exoribonuclease that plays an important role in tRNA 3'-end maturation. Removes nucleotide residues following the 3'-CCA terminus of tRNAs; can also add nucleotides to the ends of RNA molecules by using nucleoside diphosphates as substrates, but this may not be physiologically important. Probably plays a role in initiation of 16S rRNA degradation (leading to ribosome degradation) during starvation. This is Ribonuclease PH from Solibacter usitatus (strain Ellin6076).